We begin with the raw amino-acid sequence, 437 residues long: tRNA-2-methylthio-N(6)-dimethylallyladenosine synthase (437 aa).

The 117-residue stretch at 5–121 folds into the MTTase N-terminal domain; it reads KKLYIKTYGC…LPELTARAAT (117 aa). [4Fe-4S] cluster contacts are provided by cysteine 14, cysteine 50, cysteine 84, cysteine 159, cysteine 163, and cysteine 166. The Radical SAM core domain occupies 145–371; sequence AKRGPTAFLT…QALLTRQQRA (227 aa). The TRAM domain maps to 374–436; that stretch reads DAKVGTTARV…ANSLRGVLIA (63 aa).

The protein belongs to the methylthiotransferase family. MiaB subfamily. As to quaternary structure, monomer. Requires [4Fe-4S] cluster as cofactor.

The protein resides in the cytoplasm. The catalysed reaction is N(6)-dimethylallyladenosine(37) in tRNA + (sulfur carrier)-SH + AH2 + 2 S-adenosyl-L-methionine = 2-methylsulfanyl-N(6)-dimethylallyladenosine(37) in tRNA + (sulfur carrier)-H + 5'-deoxyadenosine + L-methionine + A + S-adenosyl-L-homocysteine + 2 H(+). Functionally, catalyzes the methylthiolation of N6-(dimethylallyl)adenosine (i(6)A), leading to the formation of 2-methylthio-N6-(dimethylallyl)adenosine (ms(2)i(6)A) at position 37 in tRNAs that read codons beginning with uridine. The protein is tRNA-2-methylthio-N(6)-dimethylallyladenosine synthase of Dinoroseobacter shibae (strain DSM 16493 / NCIMB 14021 / DFL 12).